The following is a 328-amino-acid chain: Eukaryotic translation initiation factor 3 subunit I (328 aa).

WD repeat units lie at residues 8–49, 50–89, 146–185, 191–230, and 288–327; these read GHER…GTYR, GHNG…ELFT, DGKK…LLKQ, GHKK…LLKT, and GHFG…FNIK.

Belongs to the eIF-3 subunit I family. As to quaternary structure, component of the eukaryotic translation initiation factor 3 (eIF-3) complex.

It localises to the cytoplasm. Its function is as follows. Component of the eukaryotic translation initiation factor 3 (eIF-3) complex, which is involved in protein synthesis of a specialized repertoire of mRNAs and, together with other initiation factors, stimulates binding of mRNA and methionyl-tRNAi to the 40S ribosome. The eIF-3 complex specifically targets and initiates translation of a subset of mRNAs involved in cell proliferation. The chain is Eukaryotic translation initiation factor 3 subunit I (TIF3I1) from Arabidopsis thaliana (Mouse-ear cress).